Here is a 45-residue protein sequence, read N- to C-terminus: Large ribosomal subunit protein bL34 (45 aa).

A disordered region spans residues 1–45 (MTKRTLGGTVRKQKRTSGFRARMRSHTGQNVIRARRKKGRHRLTV). Basic residues-rich tracts occupy residues 11 to 25 (RKQK…RMRS) and 33 to 45 (RARR…RLTV).

It belongs to the bacterial ribosomal protein bL34 family.

This Picosynechococcus sp. (strain ATCC 27264 / PCC 7002 / PR-6) (Agmenellum quadruplicatum) protein is Large ribosomal subunit protein bL34.